The sequence spans 714 residues: Macrophage-expressed gene 1 protein (714 aa).

Positions 1–19 (MNSFMAIALIWMMIACAEA) are cleaved as a signal peptide. One can recognise an MACPF domain in the interval 30-345 (GFQTCKDTLK…TAVRHYYTFN (316 aa)). The cysteines at positions 34 and 70 are disulfide-linked. 2 beta stranded membrane passes run 113-120 (FSINTELS) and 127-132 (GKFSTE). N-linked (GlcNAc...) asparagine glycosylation occurs at Asn-185. The next 2 membrane-spanning stretches (beta stranded) occupy residues 235–244 (TVTASAGIAF) and 248–256 (VNFKVETDH). N-linked (GlcNAc...) asparagine glycosylation is present at Asn-269. Cys-350 and Cys-369 are oxidised to a cystine. Residue Asn-375 is glycosylated (N-linked (GlcNAc...) asparagine). 5 disulfide bridges follow: Cys-385–Cys-394, Cys-432–Cys-446, Cys-436–Cys-442, Cys-531–Cys-569, and Cys-554–Cys-574. Residues 410–653 (PSGYTPVHLL…GDGNGMSGGE (244 aa)) form a P2 region. The chain crosses the membrane as a helical span at residues 654-674 (AAGVTLGVIIALGIVITLAIY). A disordered region spans residues 690 to 714 (EQESLVGSFATDASPPNGEQDPCPA).

Belongs to the MPEG1 family. Homooligomer; predominantly forms a homooligomeric arc-shaped pore complex instead of complete rings of 16 subunits. Post-translationally, proteolytically processed in two steps to generate the Macrophage-expressed gene 1 protein, processed form: cleaved by trypsin in proximity of the helical transmembrane domain releases the ectodomain into the lysosomal lumen to orient the pore-forming domain toward the endogenous membranes, and processed by the asparagine endopeptidase (LGMN). Proteolytic processing in antigen-containing vesicles is pH-dependent. In terms of processing, monoubiquitinated in response to bacterial infection; ubiquitination is required for vesicular localization and antibacterial activity and can be blocked by bacterial cell cycle inhibiting factor (cif).

The protein resides in the cytoplasmic vesicle membrane. It is found in the cytoplasmic vesicle. It localises to the phagosome membrane. With respect to regulation, forms arc- and ring-shaped pre-pores on top of the membrane at neutral to slightly acidic pH conditions and converts to pores upon acidification. Undergoes transition from the pre-pore to the pore in a processive clockwise hand-over-hand process. In the pore state, 2 alpha-helical regions refold into transmembrane hairpins (TMH1 and TMH2) in each protomer that form in the ensemble complex giant beta-barrel transmembrane pores. Functionally, pore-forming protein involved in both innate and adaptive immunity. Plays a central role in antigen cross-presentation in dendritic cells by forming a pore in antigen-containing compartments, thereby promoting delivery of antigens for cross-presentation. Also involved in innate immune response following bacterial infection; shows antibacterial activity against a wide spectrum of Gram-positive, Gram-negative and acid-fast bacteria. Reduces the viability of the intracytosolic pathogen L.monocytogenes by inhibiting acidification of the phagocytic vacuole of host cells which restricts bacterial translocation from the vacuole to the cytosol. Required for the antibacterial activity of reactive oxygen species and nitric oxide. Pore-forming protein that plays a central role in antigen cross-presentation in dendritic cells by mediating delivery of antigens for cross-presentation. Dendritic cells bridge innate and adaptive immunity by capturing exogenous antigens on MHC class-I molecules and presenting them to naive CD8(+) T-cells. Acts by forming a pore in antigen-containing compartments, promoting the release of antigens into the cytosol, enabling generation of MHCI:peptide complexes and T-cell priming. This Rattus norvegicus (Rat) protein is Macrophage-expressed gene 1 protein (Mpeg1).